The following is a 2195-amino-acid chain: Genome polyprotein (2195 aa).

G2 is lipidated: N-myristoyl glycine; by host. The Cytoplasmic portion of the chain corresponds to 2–1505 (GAQVSTQKTG…HVSRAFICLQ (1504 aa)). The segment at 567 to 583 (LLQGDVVEAVENAVARV) is amphipathic alpha-helix. Residues H882 and D900 each act as for protease 2A activity in the active site. Residues C917 and C919 each contribute to the Zn(2+) site. C971 acts as the For protease 2A activity in catalysis. Zn(2+) is bound by residues C977 and H979. Residues 1111–1183 (NNGWLKKFTE…EQSAPSQSDQ (73 aa)) form a membrane-binding region. The tract at residues 1111–1249 (NNGWLKKFTE…SPGAGKSVAT (139 aa)) is oligomerization. The interval 1132 to 1136 (SIKIQ) is RNA-binding. Residues 1215–1371 (EKKMSNYIQF…SMYSQNGKIN (157 aa)) enclose the SF3 helicase domain. Residues C1379, C1391, and C1396 each coordinate Zn(2+). The segment at 1379–1396 (CDEECCPVNFKRCCPLVC) adopts a C4-type; degenerate zinc-finger fold. The tract at residues 1423–1430 (EYNHRHSV) is RNA-binding. Residues 1434-1439 (LEALFQ) are oligomerization. Residues 1506–1521 (ALTTFVSVAGIIYIIY) lie within the membrane without spanning it. Residues 1522–2195 (KLFAGFQGAY…TLRRKWLDSF (674 aa)) lie on the Cytoplasmic side of the membrane. Y1531 bears the O-(5'-phospho-RNA)-tyrosine mark. Residues 1551 to 1729 (GPAFEFAVAM…FSAALLKHYF (179 aa)) form the Peptidase C3 domain. Residues H1590, E1621, and C1697 each act as for protease 3C activity in the active site. The region spanning 1960-2076 (GHLIAFDYSG…SYPWPIDASL (117 aa)) is the RdRp catalytic domain. The Mg(2+) site is built by D1966 and D2062.

This sequence belongs to the picornaviruses polyprotein family. In terms of assembly, interacts with capsid protein VP1 and capsid protein VP3 to form heterotrimeric protomers. As to quaternary structure, interacts with capsid protein VP0, and capsid protein VP3 to form heterotrimeric protomers. Five protomers subsequently associate to form pentamers which serve as building blocks for the capsid. Interacts with capsid protein VP2, capsid protein VP3 and capsid protein VP4 following cleavage of capsid protein VP0. Interacts with capsid protein VP1 and capsid protein VP3 in the mature capsid. In terms of assembly, interacts with capsid protein VP0 and capsid protein VP1 to form heterotrimeric protomers. Five protomers subsequently associate to form pentamers which serve as building blocks for the capsid. Interacts with capsid protein VP4 in the mature capsid. Interacts with protein 2C; this interaction may be important for virion morphogenesis. As to quaternary structure, interacts with capsid protein VP1 and capsid protein VP3. Homodimer. In terms of assembly, homohexamer; forms a hexameric ring structure with 6-fold symmetry characteristic of AAA+ ATPases. Interacts (via N-terminus) with host RTN3 (via reticulon domain); this interaction is important for viral replication. Interacts with capsid protein VP3; this interaction may be important for virion morphogenesis. As to quaternary structure, interacts with protein 3CD. Homodimer. Interacts with host GBF1. Interacts (via GOLD domain) with host ACBD3 (via GOLD domain); this interaction allows the formation of a viral protein 3A/ACBD3 heterotetramer with a 2:2 stoichiometry, which will stimulate the recruitment of host PI4KB in order to synthesize PI4P at the viral RNA replication sites. In terms of assembly, interacts with RNA-directed RNA polymerase. As to quaternary structure, interacts with protein 3AB and with RNA-directed RNA polymerase. Interacts with Viral protein genome-linked and with protein 3CD. Requires Mg(2+) as cofactor. Post-translationally, specific enzymatic cleavages in vivo by the viral proteases yield processing intermediates and the mature proteins. Myristoylation is required for the formation of pentamers during virus assembly. Further assembly of 12 pentamers and a molecule of genomic RNA generates the provirion. In terms of processing, during virion maturation, immature virions are rendered infectious following cleavage of VP0 into VP4 and VP2. This maturation seems to be an autocatalytic event triggered by the presence of RNA in the capsid and it is followed by a conformational change infectious virion. Post-translationally, myristoylation is required during RNA encapsidation and formation of the mature virus particle. VPg is uridylylated by the polymerase into VPg-pUpU. This acts as a nucleotide-peptide primer for the genomic RNA replication.

It localises to the virion. The protein localises to the host cytoplasm. It is found in the host cytoplasmic vesicle membrane. The protein resides in the host nucleus. It catalyses the reaction a ribonucleoside 5'-triphosphate + H2O = a ribonucleoside 5'-diphosphate + phosphate + H(+). The enzyme catalyses Selective cleavage of Tyr-|-Gly bond in the picornavirus polyprotein.. The catalysed reaction is RNA(n) + a ribonucleoside 5'-triphosphate = RNA(n+1) + diphosphate. It carries out the reaction Selective cleavage of Gln-|-Gly bond in the poliovirus polyprotein. In other picornavirus reactions Glu may be substituted for Gln, and Ser or Thr for Gly.. Its activity is regulated as follows. Replication or transcription is subject to high level of random mutations by the nucleotide analog ribavirin. Functionally, forms an icosahedral capsid of pseudo T=3 symmetry with capsid proteins VP2 and VP3. The capsid is 300 Angstroms in diameter, composed of 60 copies of each capsid protein and enclosing the viral positive strand RNA genome. Capsid protein VP1 mainly forms the vertices of the capsid. Capsid protein VP1 interacts with host cell receptor to provide virion attachment to target host cells. This attachment induces virion internalization. Tyrosine kinases are probably involved in the entry process. After binding to its receptor, the capsid undergoes conformational changes. Capsid protein VP1 N-terminus (that contains an amphipathic alpha-helix) and capsid protein VP4 are externalized. Together, they shape a pore in the host membrane through which viral genome is translocated to host cell cytoplasm. Its function is as follows. Forms an icosahedral capsid of pseudo T=3 symmetry with capsid proteins VP2 and VP3. The capsid is 300 Angstroms in diameter, composed of 60 copies of each capsid protein and enclosing the viral positive strand RNA genome. Lies on the inner surface of the capsid shell. After binding to the host receptor, the capsid undergoes conformational changes. Capsid protein VP4 is released, Capsid protein VP1 N-terminus is externalized, and together, they shape a pore in the host membrane through which the viral genome is translocated into the host cell cytoplasm. In terms of biological role, component of immature procapsids, which is cleaved into capsid proteins VP4 and VP2 after maturation. Allows the capsid to remain inactive before the maturation step. Functionally, cysteine protease that cleaves viral polyprotein and specific host proteins. It is responsible for the autocatalytic cleavage between the P1 and P2 regions, which is the first cleavage occurring in the polyprotein. Also cleaves the host translation initiation factor EIF4G1, in order to shut down the capped cellular mRNA translation. Inhibits the host nucleus-cytoplasm protein and RNA trafficking by cleaving host members of the nuclear pores. Counteracts stress granule formation probably by antagonizing its assembly or promoting its dissassembly. Its function is as follows. Plays an essential role in the virus replication cycle by acting as a viroporin. Creates a pore in the host endoplasmic reticulum and as a consequence releases Ca2+ in the cytoplasm of infected cell. In turn, high levels of cytoplasmic calcium may trigger membrane trafficking and transport of viral ER-associated proteins to viroplasms, sites of viral genome replication. Induces and associates with structural rearrangements of intracellular membranes. Displays RNA-binding, nucleotide binding and NTPase activities. May play a role in virion morphogenesis and viral RNA encapsidation by interacting with the capsid protein VP3. In terms of biological role, localizes the viral replication complex to the surface of membranous vesicles. Together with protein 3CD binds the Cis-Active RNA Element (CRE) which is involved in RNA synthesis initiation. Acts as a cofactor to stimulate the activity of 3D polymerase, maybe through a nucleid acid chaperone activity. Functionally, localizes the viral replication complex to the surface of membranous vesicles. It inhibits host cell endoplasmic reticulum-to-Golgi apparatus transport and causes the disassembly of the Golgi complex, possibly through GBF1 interaction. This would result in depletion of MHC, trail receptors and IFN receptors at the host cell surface. Plays an essential role in viral RNA replication by recruiting ACBD3 and PI4KB at the viral replication sites, thereby allowing the formation of the rearranged membranous structures where viral replication takes place. Its function is as follows. Acts as a primer for viral RNA replication and remains covalently bound to viral genomic RNA. VPg is uridylylated prior to priming replication into VPg-pUpU. The oriI viral genomic sequence may act as a template for this. The VPg-pUpU is then used as primer on the genomic RNA poly(A) by the RNA-dependent RNA polymerase to replicate the viral genome. During genome replication, the VPg-RNA linkage is removed by the host TDP2, thereby accelerating replication. During the late stage of the replication cycle, host TDP2 is excluded from sites of viral RNA synthesis and encapsidation, allowing for the generation of progeny virions. Involved in the viral replication complex and viral polypeptide maturation. It exhibits protease activity with a specificity and catalytic efficiency that is different from protease 3C. Protein 3CD lacks polymerase activity. The 3C domain in the context of protein 3CD may have an RNA binding activity. Protein 3CD binds to the 5'UTR of the viral genome. In terms of biological role, replicates the viral genomic RNA on the surface of intracellular membranes. May form linear arrays of subunits that propagate along a strong head-to-tail interaction called interface-I. Covalently attaches UMP to a tyrosine of VPg, which is used to prime RNA synthesis. The positive stranded RNA genome is first replicated at virus induced membranous vesicles, creating a dsRNA genomic replication form. This dsRNA is then used as template to synthesize positive stranded RNA genomes. ss(+)RNA genomes are either translated, replicated or encapsidated. Functionally, major viral protease that mediates proteolytic processing of the polyprotein. Cleaves host EIF5B, contributing to host translation shutoff. Also cleaves host PABPC1, contributing to host translation shutoff. Cleaves host NLRP1, triggers host N-glycine-mediated degradation of the autoinhibitory NLRP1 N-terminal fragment. This chain is Genome polyprotein, found in Echovirus 11 (strain Gregory).